Reading from the N-terminus, the 473-residue chain is Adenosylhomocysteinase (473 aa).

Substrate-binding residues include threonine 60, aspartate 135, and glutamate 197. An NAD(+)-binding site is contributed by 198–200; that stretch reads TTT. Positions 227 and 231 each coordinate substrate. NAD(+) is bound by residues asparagine 232, 261 to 266, glutamate 284, asparagine 319, 340 to 342, and asparagine 385; these read GFGDVG and IGH.

The protein belongs to the adenosylhomocysteinase family. NAD(+) is required as a cofactor.

It is found in the cytoplasm. The enzyme catalyses S-adenosyl-L-homocysteine + H2O = L-homocysteine + adenosine. It participates in amino-acid biosynthesis; L-homocysteine biosynthesis; L-homocysteine from S-adenosyl-L-homocysteine: step 1/1. Functionally, may play a key role in the regulation of the intracellular concentration of adenosylhomocysteine. The sequence is that of Adenosylhomocysteinase from Bradyrhizobium sp. (strain BTAi1 / ATCC BAA-1182).